Reading from the N-terminus, the 393-residue chain is MIGRRPQGLRAAASLKKQQQLEKQKQEASYELSGNSSPSKENGSENVDNGEMEDETMLVYTEEDNISQLWGLYEMSREKLENDDIDASVSLVFGTIHEADRILRNTEDISTLPKDFHAAYSSALLAVSELFEIAQKRLKETNTEESYIDAAIERAQLGLDAPGNESRLFLALARAYLEKVRVLVWRHDNEESLANIPVTQLVNPYIEKAIQYLRPLAQDSTEYFDALTPDSLRPLYILSSYLFQFGDQFSEAFLLDVCSIITALWLKSVVDPNTPAYYKLIAQEAVLNNYTTFAEYYMDLLDNSESNVDDLINKASSWLNNSVDTWNVIYTLDKSPERLLKLADIKMDLAQIVQDEASQDNYLKEACNAIKEAQGSGVELSPDYVEFVEAYSA.

Residues M1–E51 are disordered. Basic and acidic residues predominate over residues Q19–A28. Positions L32–V47 are enriched in polar residues.

It belongs to the ETT1 family. As to quaternary structure, interacts with ofd1.

The protein localises to the cytoplasm. Its subcellular location is the nucleus. Required for correct translation termination. Positive regulator of the stability of the N-terminal transcription factor domain (Sre1N) of sre1 which is released from the membrane and enters the nucleus to activate hypoxic gene expression. Also acts as a direct inhibitor of ofd1. Functions probably by inhibiting the ability of the ofd1 to accelerate Sre1N degradation in absence of oxygen. This is Negative regulator of ofd1 (nro1) from Schizosaccharomyces pombe (strain 972 / ATCC 24843) (Fission yeast).